The chain runs to 513 residues: Cytochrome P450 94A2 (513 aa).

Residues 7-24 (ISWLLFSTSLFWFLFLAT) form a helical membrane-spanning segment. Cys-455 is a binding site for heme.

The protein belongs to the cytochrome P450 family. Requires heme as cofactor. As to expression, weakly expressed in seedlings.

It localises to the endoplasmic reticulum membrane. In terms of biological role, catalyzes the omega-hydroxylation of various fatty acids (FA). The substrate specificity is higher for myristate &gt; laurate = palmitate (C14&gt;C16=C12). This is Cytochrome P450 94A2 (CYP94A2) from Vicia sativa (Spring vetch).